The primary structure comprises 88 residues: Small ribosomal subunit protein bS18B (88 aa).

Belongs to the bacterial ribosomal protein bS18 family. In terms of assembly, part of the 30S ribosomal subunit. Forms a tight heterodimer with protein bS6.

Its function is as follows. Binds as a heterodimer with protein bS6 to the central domain of the 16S rRNA, where it helps stabilize the platform of the 30S subunit. This chain is Small ribosomal subunit protein bS18B, found in Roseiflexus castenholzii (strain DSM 13941 / HLO8).